A 179-amino-acid chain; its full sequence is Large ribosomal subunit protein uL5 (179 aa).

It belongs to the universal ribosomal protein uL5 family. As to quaternary structure, part of the 50S ribosomal subunit; part of the 5S rRNA/L5/L18/L25 subcomplex. Contacts the 5S rRNA and the P site tRNA. Forms a bridge to the 30S subunit in the 70S ribosome.

Functionally, this is one of the proteins that bind and probably mediate the attachment of the 5S RNA into the large ribosomal subunit, where it forms part of the central protuberance. In the 70S ribosome it contacts protein S13 of the 30S subunit (bridge B1b), connecting the 2 subunits; this bridge is implicated in subunit movement. Contacts the P site tRNA; the 5S rRNA and some of its associated proteins might help stabilize positioning of ribosome-bound tRNAs. In Nitrosomonas europaea (strain ATCC 19718 / CIP 103999 / KCTC 2705 / NBRC 14298), this protein is Large ribosomal subunit protein uL5.